The primary structure comprises 429 residues: Proton extrusion protein PxcA (429 aa).

Positions 139 to 161 (LNGPEAPQTNGDRPDNKPKVETV) are disordered. Residues 150–161 (DRPDNKPKVETV) are compositionally biased toward basic and acidic residues. 4 helical membrane passes run 211 to 231 (FLLT…IAIT), 306 to 326 (AYEN…ILLI), 353 to 373 (LIIL…WEII), and 389 to 409 (FNFL…KYWI).

It belongs to the CemA family.

It is found in the cell inner membrane. Functionally, required for H(+) efflux immediately after light irradiation to form a rapid H(+) concentration gradient across the thylakoid membranes. Together with PxcL, contributes to transient H(+) uptake following dark to light transition. This is Proton extrusion protein PxcA from Picosynechococcus sp. (strain ATCC 27264 / PCC 7002 / PR-6) (Agmenellum quadruplicatum).